The sequence spans 131 residues: Large ribosomal subunit protein bL19 (131 aa).

It belongs to the bacterial ribosomal protein bL19 family.

In terms of biological role, this protein is located at the 30S-50S ribosomal subunit interface and may play a role in the structure and function of the aminoacyl-tRNA binding site. This Rhodopseudomonas palustris (strain BisB18) protein is Large ribosomal subunit protein bL19.